The following is a 125-amino-acid chain: Aldolase FrzH (125 aa).

The enzyme catalyses (2S)-3-(4-methoxyphenyl)-2-[(3S)-3-(methylamino)-8-oxo-1-azaspiro[4.5]decan-1-yl]propanal = (1S,3S,6S,7S,8R)-7-hydroxy-6-[(4-methoxyphenyl)methyl]-3-(methylamino)-5-azatricyclo[6.3.1.0(1,5)]dodecan-9-one. It functions in the pathway secondary metabolite biosynthesis. In terms of biological role, aldolase; part of the gene cluster that mediates the biosynthesis of the alkaloid (-)-FR901483, a potent immunosuppressant that shows efficacy in animal models and a probable inhibitor of purine nucleotide biosynthesis by targeting phosphoribosylpyrophosphate amidotransferase (PPAT). Within the pathway, FrzH is a new kind of aldolase with no similarities to known aldolases, and which catalyzes the intramolecular aldol condensation via formation of a C9-C3' bond to yield an aza-tricyclic product. The biosynthesis of (-)-FR901483 starts with the condensation of two L-tyrosines to yield (S,S)-dityrosyl-piperazine. This process occurs in 3 steps with the non-canonical nonribosomal peptide synthetase FrzA catalyzing the reduction of L-tyrosine into L-tyrosinal, the spontaneous condensation of 2 L-tyrosinal units, and the subsequent reduction by the NmrA-like family domain-containing oxidoreductase FrzB. The cytochrome P450 monooxygenase FrzC then performs coupling between N10 and C1' to morph the piperazine into a 1,4-diazabicyclo[3.2.1]octane spiro-fused to a 2,5-cyclohexadienone. The dienone portion is further reduced to cyclohexanone by the flavin-dependent reductase FrzD. The methyltranserases (MTs) FrzE and FrzF are then involved in the methylation at the C10' amine and the C4 phenolic oxygen, respectively. The order of the two MTs appear to be interchangeable. Cleavage of the C9-N10' bond by the dioxygenase FrzG then leads to formation of a conjugated iminium. In addition to the oxidation of C9, an additional dehydrogenation between C7 and C8 can occur to give a likely shunt product. The next biosynthetic step is the intramolecular aldol condensation catalyzed by the newly identified aldolase FrzH to yield an aza-tricyclic product with the formation of a C9-C3' bond. The short-chain dehydrogenase/reductase FrzI then produces dephospho-(-)-FR901483 that is phosphorylated at C4'-OH into (-)-FR901483 by the phosphotransferase FrzJ. In Cladobotryum sp, this protein is Aldolase FrzH.